A 360-amino-acid chain; its full sequence is Phosphoserine aminotransferase (360 aa).

Arginine 41 contributes to the L-glutamate binding site. Pyridoxal 5'-phosphate contacts are provided by tryptophan 101, threonine 152, aspartate 172, and glutamine 195. Lysine 196 is subject to N6-(pyridoxal phosphate)lysine. 237-238 (NT) is a pyridoxal 5'-phosphate binding site.

This sequence belongs to the class-V pyridoxal-phosphate-dependent aminotransferase family. SerC subfamily. In terms of assembly, homodimer. Requires pyridoxal 5'-phosphate as cofactor.

It is found in the cytoplasm. The enzyme catalyses O-phospho-L-serine + 2-oxoglutarate = 3-phosphooxypyruvate + L-glutamate. The catalysed reaction is 4-(phosphooxy)-L-threonine + 2-oxoglutarate = (R)-3-hydroxy-2-oxo-4-phosphooxybutanoate + L-glutamate. It functions in the pathway amino-acid biosynthesis; L-serine biosynthesis; L-serine from 3-phospho-D-glycerate: step 2/3. Its pathway is cofactor biosynthesis; pyridoxine 5'-phosphate biosynthesis; pyridoxine 5'-phosphate from D-erythrose 4-phosphate: step 3/5. Catalyzes the reversible conversion of 3-phosphohydroxypyruvate to phosphoserine and of 3-hydroxy-2-oxo-4-phosphonooxybutanoate to phosphohydroxythreonine. This Burkholderia cenocepacia (strain HI2424) protein is Phosphoserine aminotransferase.